A 247-amino-acid polypeptide reads, in one-letter code: Tetraspanin-18 (247 aa).

The Cytoplasmic portion of the chain corresponds to 1–15 (MEGDCLSCMKYLMFL). The helical transmembrane segment at 16–36 (FNFFIFLGGACLLGVGIWVIV) threads the bilayer. Topologically, residues 37–49 (DPTGFREIVAANP) are extracellular. A helical membrane pass occupies residues 50–70 (LLFTGAYIMLAMGAMLFLLGF). The Cytoplasmic portion of the chain corresponds to 71-82 (LGCCGAIRENKC). A helical membrane pass occupies residues 83 to 103 (LLLFFFMFILLIFLAELSAAI). Over 104 to 222 (LAFIFRENLT…SFETYVYLAG (119 aa)) the chain is Extracellular. Asn111 and Asn129 each carry an N-linked (GlcNAc...) asparagine glycan. Residues 223–243 (ALAIGVLAIELFAMIFAMCLF) traverse the membrane as a helical segment. Residues 244 to 247 (RGIQ) are Cytoplasmic-facing.

The protein belongs to the tetraspanin (TM4SF) family.

Its subcellular location is the membrane. Maintains CDH6 protein and promotes CDH6-dependent adherens junctions, inhibiting neural crest migration. This Gallus gallus (Chicken) protein is Tetraspanin-18.